The chain runs to 24 residues: Humanin (24 aa).

The interval 1-12 (MAPRGFSCLLLL) is sufficient to interact with BID and BIM and to suppress BID and BIM activity. Residues 3-19 (PRGFSCLLLLTSEIDLP) are sufficient for neuroprotective activity. The segment at 5 to 12 (GFSCLLLL) is sufficient to interact with MPP8. Required for secretion stretches follow at residues 9–11 (LLL) and 19–20 (PV).

As to quaternary structure, homodimer. Interacts with amyloid-beta protein 42 (Abeta42); the interaction prevents Abeta42 fibril formation. Interacts with BAX; forms fibers with BAX which results in BAX conformational changes and sequestering of BAX into the fibers, preventing BAX activation. Interacts with both full-length BID and cleaved BID p15; forms fibers with BID which results in BID conformational changes and sequestering of BID into the fibers, preventing BID activation. Interacts with BIM isoform BimEL but not with BIM isoforms BimL or BimS; the interaction prevents BIM-induced apoptosis. Interacts with IGFBP3; competes with importin KPNB1 for binding to IGFBP3, blocking IGFBP3 nuclear import. Interacts with TRIM11. Interacts with MPP8. Expressed in testis, seminal plasma and sperm (at protein level). Higher seminal plasma levels are associated with normospermia than with oligospermia, asthenospermia or oligoasthenospermia (at protein level). Higher sperm levels are associated with normospermia than with asthenospermia (at protein level). Expressed in retinal epithelial cells (at protein level). Expressed in the heart, skeletal muscle, kidney and liver. Lesser but significant expression is observed in the brain and the gastrointestinal tract. Expressed in the AD brain, where it is found in some of the large intact neurons of the occipital lobes and small and round reactive glial cells in the hippocampus.

The protein resides in the secreted. It is found in the cytoplasm. Its subcellular location is the cell projection. It localises to the cilium. The protein localises to the flagellum. The protein resides in the nucleus. It is found in the mitochondrion. Plays a role as a neuroprotective factor. Protects against neuronal cell death induced by multiple different familial Alzheimer disease genes and amyloid-beta proteins in Alzheimer disease. Mediates its neuroprotective effect by interacting with a receptor complex composed of IL6ST/GP130, IL27RA/WSX1 and CNTFR. Also acts as a ligand for G-protein coupled receptors FPR2/FPRL1 and FPR3/FPRL2. Inhibits amyloid-beta protein 40 fibril formation. Also inhibits amyloid-beta protein 42 fibril formation. Suppresses apoptosis by binding to BAX and preventing the translocation of BAX from the cytosol to mitochondria. Also suppresses apoptosis by binding to BID and inhibiting the interaction of BID with BAX and BAK which prevents oligomerization of BAX and BAK and suppresses release of apoptogenic proteins from mitochondria. Forms fibers with BAX and also with BID, inducing BAX and BID conformational changes and sequestering them into the fibers which prevents their activation. Can also suppress apoptosis by interacting with BIM isoform BimEL, inhibiting BimEL-induced activation of BAX, blocking oligomerization of BAX and BAK, and preventing release of apoptogenic proteins from mitochondria. Plays a role in up-regulation of anti-apoptotic protein BIRC6/APOLLON, leading to inhibition of neuronal cell death. Binds to IGFBP3 and specifically blocks IGFBP3-induced cell death. Competes with importin KPNB1 for binding to IGFBP3 which is likely to block IGFBP3 nuclear import. Induces chemotaxis of mononuclear phagocytes via FPR2/FPRL1. Reduces aggregation and fibrillary formation by suppressing the effect of APP on mononuclear phagocytes and acts by competitively inhibiting the access of FPR2 to APP. Protects retinal pigment epithelium (RPE) cells against oxidative stress-induced and endoplasmic reticulum (ER) stress-induced apoptosis. Promotes mitochondrial biogenesis in RPE cells following oxidative stress and promotes STAT3 phosphorylation which leads to inhibition of CASP3 release. Also reduces CASP4 levels in RPE cells, suppresses ER stress-induced mitochondrial superoxide production and plays a role in up-regulation of mitochondrial glutathione. Reduces testicular hormone deprivation-induced apoptosis of germ cells at the nonandrogen-sensitive stages of the seminiferous epithelium cycle. Protects endothelial cells against free fatty acid-induced inflammation by suppressing oxidative stress, reducing expression of TXNIP and inhibiting activation of the NLRP3 inflammasome which inhibits expression of pro-inflammatory cytokines IL1B and IL18. Protects against high glucose-induced endothelial cell dysfunction by mediating activation of ERK5 which leads to increased expression of transcription factor KLF2 and prevents monocyte adhesion to endothelial cells. Inhibits the inflammatory response in astrocytes. Increases the expression of PPARGC1A/PGC1A in pancreatic beta cells which promotes mitochondrial biogenesis. Increases insulin sensitivity. This is Humanin from Homo sapiens (Human).